Consider the following 399-residue polypeptide: Telomeric repeat-binding factor 2-interacting protein 1 (399 aa).

Residues 1-21 (MAEAMELGKDPNGPTHSSTLF) form a disordered region. Ala2 is subject to N-acetylalanine. The BRCT domain maps to 10–101 (DPNGPTHSST…EKLELEAYRL (92 aa)). Phosphoserine occurs at positions 36 and 43. Lys114 participates in a covalent cross-link: Glycyl lysine isopeptide (Lys-Gly) (interchain with G-Cter in SUMO2). The 61-residue stretch at 130 to 190 (QSQAGRMVFT…SMKDRYLKRL (61 aa)) folds into the Myb-like domain. Residues Ser156 and Ser158 each carry the phosphoserine modification. A Glycyl lysine isopeptide (Lys-Gly) (interchain with G-Cter in SUMO2) cross-link involves residue Lys196. Disordered regions lie at residues 199–245 (LGEA…KEEI) and 279–309 (TMCD…VSAP). Phosphoserine occurs at positions 205 and 208. Glycyl lysine isopeptide (Lys-Gly) (interchain with G-Cter in SUMO2) cross-links involve residues Lys210, Lys214, and Lys242. A compositionally biased stretch (acidic residues) spans 281–304 (CDDDPCTPEEDSETQPDEEEEEEE). Lys372 participates in a covalent cross-link: Glycyl lysine isopeptide (Lys-Gly) (interchain with G-Cter in SUMO2). The Nuclear localization signal signature appears at 383-399 (KKFGAQNVARRIEFRKK).

The protein belongs to the RAP1 family. As to quaternary structure, associates with the I-kappa-B-kinase (IKK) core complex, composed of CHUK, IKBKB and IKBKG. Homodimer. Component of the shelterin complex (telosome) composed of TERF1, TERF2, TINF2, TERF2IP ACD and POT1. Interacts with TERF2 (but not TERF1) with its C-terminus. Interacts with SLX4/BTBD12. Interacts with TERF2; the interaction is direct.

The protein localises to the nucleus. Its subcellular location is the cytoplasm. It is found in the chromosome. It localises to the telomere. Its function is as follows. Acts both as a regulator of telomere function and as a transcription regulator. Involved in the regulation of telomere length and protection as a component of the shelterin complex (telosome). In contrast to other components of the shelterin complex, it is dispensible for telomere capping and does not participate in the protection of telomeres against non-homologous end-joining (NHEJ)-mediated repair. Instead, it is required to negatively regulate telomere recombination and is essential for repressing homology-directed repair (HDR), which can affect telomere length. Does not bind DNA directly: recruited to telomeric double-stranded 5'-TTAGGG-3' repeats via its interaction with TERF2. Independently of its function in telomeres, also acts as a transcription regulator: recruited to extratelomeric 5'-TTAGGG-3' sites via its association with TERF2 or other factors, and regulates gene expression. When cytoplasmic, associates with the I-kappa-B-kinase (IKK) complex and acts as a regulator of the NF-kappa-B signaling by promoting IKK-mediated phosphorylation of RELA/p65, leading to activate expression of NF-kappa-B target genes. This is Telomeric repeat-binding factor 2-interacting protein 1 (TERF2IP) from Bos taurus (Bovine).